We begin with the raw amino-acid sequence, 347 residues long: MNPLTLSLVLTTMMAGTLIVMTSSHWFMIWVGFEMNMLAIIPLLTKEHNPRSTEAATKYFLTQATASMLLMMAAITNLLYTGHWSIMKLINPTASIMMTMALTMKLGLSPFHFWVPEVTQGIPLMSGLILLTWQKLAPLSGLYMIMPLINTDILLIMSLMSIAIGGWGGLNQTQLRKIMAYSSIAHMGWMMAVLAYNPTMTLLNLYIYIPMTITTFMLLMINSTTTTTSLSQTWNKLPLITTLILITMLSLGGLPPLTGFLPKWAIIQEMTKNSSIIMPTLMTLLALLNLYFYTRITYTTSLTMFPTANNMKIKWQFKNPKQMMSLPLMIMISTLVPPLAPMMPILT.

10 consecutive transmembrane segments (helical) span residues 1–21 (MNPLTLSLVLTTMMAGTLIVM), 25–45 (HWFMIWVGFEMNMLAIIPLLT), 67–87 (SMLLMMAAITNLLYTGHWSIM), 111–131 (FHFWVPEVTQGIPLMSGLILL), 144–164 (MIMPLINTDILLIMSLMSIAI), 178–198 (IMAYSSIAHMGWMMAVLAYNP), 201–221 (TLLNLYIYIPMTITTFMLLMI), 237–257 (LPLITTLILITMLSLGGLPPL), 274–294 (SSIIMPTLMTLLALLNLYFYT), and 326–346 (LPLMIMISTLVPPLAPMMPIL).

Belongs to the complex I subunit 2 family. Core subunit of respiratory chain NADH dehydrogenase (Complex I) which is composed of 45 different subunits. Interacts with TMEM242.

It localises to the mitochondrion inner membrane. It catalyses the reaction a ubiquinone + NADH + 5 H(+)(in) = a ubiquinol + NAD(+) + 4 H(+)(out). Its function is as follows. Core subunit of the mitochondrial membrane respiratory chain NADH dehydrogenase (Complex I) which catalyzes electron transfer from NADH through the respiratory chain, using ubiquinone as an electron acceptor. Essential for the catalytic activity and assembly of complex I. This chain is NADH-ubiquinone oxidoreductase chain 2, found in Myotis simus (Velvety myotis).